A 229-amino-acid chain; its full sequence is UPF0758 protein Moth_0536 (229 aa).

Residues 107–229 (VIRNPRDVAG…FTSLKERNLL (123 aa)) form the MPN domain. Residues H178, H180, and D191 each coordinate Zn(2+). The short motif at 178–191 (HNHPSGDPTPSQED) is the JAMM motif element.

The protein belongs to the UPF0758 family.

The polypeptide is UPF0758 protein Moth_0536 (Moorella thermoacetica (strain ATCC 39073 / JCM 9320)).